A 598-amino-acid chain; its full sequence is Arginine--tRNA ligase (598 aa).

A 'HIGH' region motif is present at residues 131–141; sequence ANPTGPMHVGH. Residues 288–308 are disordered; sequence KLPPPKSKKGQPPAQPQPDEE.

Belongs to the class-I aminoacyl-tRNA synthetase family. In terms of assembly, monomer.

It localises to the cytoplasm. It carries out the reaction tRNA(Arg) + L-arginine + ATP = L-arginyl-tRNA(Arg) + AMP + diphosphate. This Anaeromyxobacter sp. (strain K) protein is Arginine--tRNA ligase.